Here is a 469-residue protein sequence, read N- to C-terminus: Probable periplasmic serine endoprotease DegP-like (469 aa).

The signal sequence occupies residues Met-1–Ala-25. Catalysis depends on charge relay system residues His-114, Asp-144, and Ser-217. Substrate-binding positions include Gly-215–Ser-217 and Leu-272–Ile-276. 2 PDZ domains span residues Leu-261–Gly-352 and Ser-358–Gly-458.

It belongs to the peptidase S1C family.

The protein resides in the periplasm. The enzyme catalyses Acts on substrates that are at least partially unfolded. The cleavage site P1 residue is normally between a pair of hydrophobic residues, such as Val-|-Val.. In terms of biological role, might be efficient in the degradation of transiently denatured and unfolded proteins which accumulate in the periplasm following stress conditions. The chain is Probable periplasmic serine endoprotease DegP-like from Marinomonas sp. (strain MWYL1).